The sequence spans 134 residues: Large-conductance mechanosensitive channel (134 aa).

The next 2 helical transmembrane spans lie at 16-36 (VIDLAVAVVIGAAFGKIVTAL) and 81-101 (GDFLNTILQFIIIAFAIFIIV).

This sequence belongs to the MscL family. Homopentamer.

The protein localises to the cell inner membrane. Channel that opens in response to stretch forces in the membrane lipid bilayer. May participate in the regulation of osmotic pressure changes within the cell. The polypeptide is Large-conductance mechanosensitive channel (Xylella fastidiosa (strain M12)).